The sequence spans 54 residues: Synaptosomal-associated protein 25 (54 aa).

This sequence belongs to the SNAP-25 family. In terms of assembly, part of the SNARE core complex containing SNAP25, VAMP2 and STX1A; this complex binds CPLX1. Found in a complex containing SYT1, SV2B and syntaxin-1. Found in a ternary complex with STX1A and VAMP8. Interacts with HSC70 and with SYT9, forming a complex with DNAJC5. The interaction with SYT9 is inhibited in presence of calcium. Isoform 1 and isoform 2 interact with BLOC1S6. Interacts with CENPF. Interacts with EQTN. Interacts with HGS. Interacts with KCNB1 (via N-terminus); reduces the voltage-dependent potassium channel KCNB1 activity in pancreatic beta cells. Interacts with OTOF. Interacts with RIMS1. Interacts with SNAPIN. Interacts with STXBP6. Interacts with TRIM9. Interacts with ZDHHC13 (via ANK repeats). Interacts with ZDHHC17 (via ANK repeats). Associates with the BLOC-1 complex. Interacts with PLCL1 (via C2 domain). Interacts with PRRT2; this interaction may impair the formation of the SNARE complex. Interacts with alpha-synuclein/SNCA. Interacts with PRPH2. Interacts with ROM1. Interacts with STX3. In terms of processing, the N-terminus is blocked.

It localises to the cytoplasm. The protein resides in the perinuclear region. The protein localises to the cell membrane. Its subcellular location is the synapse. It is found in the synaptosome. It localises to the photoreceptor inner segment. In terms of biological role, t-SNARE involved in the molecular regulation of neurotransmitter release. May play an important role in the synaptic function of specific neuronal systems. Associates with proteins involved in vesicle docking and membrane fusion. Regulates plasma membrane recycling through its interaction with CENPF. Modulates the gating characteristics of the delayed rectifier voltage-dependent potassium channel KCNB1 in pancreatic beta cells. The chain is Synaptosomal-associated protein 25 (SNAP25) from Oryctolagus cuniculus (Rabbit).